The chain runs to 437 residues: Aminopeptidase W (437 aa).

Residues Cys-70, His-361, and Asn-382 contribute to the active site.

Belongs to the peptidase C1 family.

The protein localises to the cytoplasm. This is Aminopeptidase W (pepW) from Lactobacillus delbrueckii subsp. lactis.